The following is a 47-amino-acid chain: Large ribosomal subunit protein bL34 (47 aa).

Belongs to the bacterial ribosomal protein bL34 family.

This Mycobacterium ulcerans (strain Agy99) protein is Large ribosomal subunit protein bL34.